The sequence spans 174 residues: N5-carboxyaminoimidazole ribonucleotide mutase (174 aa).

Substrate contacts are provided by Ser-15, Asp-18, and Arg-45.

It belongs to the AIR carboxylase family. Class I subfamily.

The catalysed reaction is 5-carboxyamino-1-(5-phospho-D-ribosyl)imidazole + H(+) = 5-amino-1-(5-phospho-D-ribosyl)imidazole-4-carboxylate. It participates in purine metabolism; IMP biosynthesis via de novo pathway; 5-amino-1-(5-phospho-D-ribosyl)imidazole-4-carboxylate from 5-amino-1-(5-phospho-D-ribosyl)imidazole (N5-CAIR route): step 2/2. Catalyzes the conversion of N5-carboxyaminoimidazole ribonucleotide (N5-CAIR) to 4-carboxy-5-aminoimidazole ribonucleotide (CAIR). The chain is N5-carboxyaminoimidazole ribonucleotide mutase from Pyrococcus abyssi (strain GE5 / Orsay).